A 484-amino-acid chain; its full sequence is Poly(A) RNA polymerase GLD2 (484 aa).

A phosphoserine mark is found at Ser-62 and Ser-69. A Nuclear localization signal motif is present at residues 76 to 92 (KRLSDEKNLPLDGKRQR). Position 95 is a phosphoserine (Ser-95). Residues Asp-213 and Asp-215 each contribute to the Mg(2+) site. In terms of domain architecture, PAP-associated spans 386–440 (NLGDLLLGFLKYYATEFDWNSQMISVREAKAIPRPDGIEWRNKYICVEEPFDGTN).

It belongs to the DNA polymerase type-B-like family. GLD2 subfamily. Interacts with CPEB1, CPEB2, CPSF1 and PABPC1. Interacts with QKI isoform QKI7; promoting recruitment to miRNA miR-122 and miR-122 stabilization. It depends on Mg(2+) as a cofactor. The cofactor is Mn(2+).

The protein resides in the cytoplasm. It localises to the nucleus. It carries out the reaction RNA(n) + ATP = RNA(n)-3'-adenine ribonucleotide + diphosphate. Cytoplasmic poly(A) RNA polymerase that adds successive AMP monomers to the 3'-end of specific RNAs, forming a poly(A) tail. In contrast to the canonical nuclear poly(A) RNA polymerase, it only adds poly(A) to selected cytoplasmic mRNAs. Does not play a role in replication-dependent histone mRNA degradation. Adds a single nucleotide to the 3' end of specific miRNAs, monoadenylation stabilizes and prolongs the activity of some but not all miRNAs. This is Poly(A) RNA polymerase GLD2 from Bos taurus (Bovine).